Here is a 453-residue protein sequence, read N- to C-terminus: Bifunctional protein GlmU (453 aa).

A pyrophosphorylase region spans residues 1 to 226 (MVAIAILAAG…YEEILGINDR (226 aa)). UDP-N-acetyl-alpha-D-glucosamine-binding positions include 7-10 (LAAG), K21, Q73, and 78-79 (GT). Mg(2+) is bound at residue D103. G140, E155, N170, and N224 together coordinate UDP-N-acetyl-alpha-D-glucosamine. Mg(2+) is bound at residue N224. Residues 227-247 (KQLALAYQILQNRIKDQAMAA) form a linker region. Residues 248-453 (GVTLIDPDSI…GWRLKQPDPT (206 aa)) are N-acetyltransferase. UDP-N-acetyl-alpha-D-glucosamine-binding residues include R329 and K347. H359 (proton acceptor) is an active-site residue. 2 residues coordinate UDP-N-acetyl-alpha-D-glucosamine: Y362 and N373. Acetyl-CoA contacts are provided by residues A376, 382 to 383 (NY), S401, A419, and R436.

The protein in the N-terminal section; belongs to the N-acetylglucosamine-1-phosphate uridyltransferase family. It in the C-terminal section; belongs to the transferase hexapeptide repeat family. In terms of assembly, homotrimer. The cofactor is Mg(2+).

It localises to the cytoplasm. It catalyses the reaction alpha-D-glucosamine 1-phosphate + acetyl-CoA = N-acetyl-alpha-D-glucosamine 1-phosphate + CoA + H(+). It carries out the reaction N-acetyl-alpha-D-glucosamine 1-phosphate + UTP + H(+) = UDP-N-acetyl-alpha-D-glucosamine + diphosphate. The protein operates within nucleotide-sugar biosynthesis; UDP-N-acetyl-alpha-D-glucosamine biosynthesis; N-acetyl-alpha-D-glucosamine 1-phosphate from alpha-D-glucosamine 6-phosphate (route II): step 2/2. It functions in the pathway nucleotide-sugar biosynthesis; UDP-N-acetyl-alpha-D-glucosamine biosynthesis; UDP-N-acetyl-alpha-D-glucosamine from N-acetyl-alpha-D-glucosamine 1-phosphate: step 1/1. Its pathway is bacterial outer membrane biogenesis; LPS lipid A biosynthesis. Functionally, catalyzes the last two sequential reactions in the de novo biosynthetic pathway for UDP-N-acetylglucosamine (UDP-GlcNAc). The C-terminal domain catalyzes the transfer of acetyl group from acetyl coenzyme A to glucosamine-1-phosphate (GlcN-1-P) to produce N-acetylglucosamine-1-phosphate (GlcNAc-1-P), which is converted into UDP-GlcNAc by the transfer of uridine 5-monophosphate (from uridine 5-triphosphate), a reaction catalyzed by the N-terminal domain. This chain is Bifunctional protein GlmU, found in Cyanothece sp. (strain PCC 7425 / ATCC 29141).